The following is a 1036-amino-acid chain: Chitin synthase 1 (1036 aa).

A compositionally biased stretch (pro residues) spans 1–10 (MDGPPSPTRV). Positions 1 to 153 (MDGPPSPTRV…RRPLPPAPLF (153 aa)) are disordered. The N-linked (GlcNAc...) asparagine glycan is linked to N38. The span at 86-108 (PSIPLSSSNPRSPIRPSTPSRVS) shows a compositional bias: low complexity. N-linked (GlcNAc...) asparagine glycosylation occurs at N179. The interval 189-229 (RASLKSAHSYTTDSTFTEDDDITNEKLNHYGPAPEGRQDRR) is disordered. Over residues 194–203 (SAHSYTTDST) the composition is skewed to polar residues. A run of 7 helical transmembrane segments spans residues 659 to 679 (FISLLFTFFSLANFYLTFYFV), 699 to 719 (IFVILRYVCVLLICLQFILSL), 733 to 753 (TMVTYSIIMAYTTFASVYIVI), 776 to 796 (IFTNLIVSSVSTIGLFFLMSF), 808 to 828 (SAQYFALLPSYICTLQVYAFC), 908 to 928 (YVVASYMVCNAILAMAVSEAY), and 945 to 967 (WSVAALALFRAIGSSAFGVINIV). Residues 994-1019 (AGLGSGFSESGKTGITSGSGMSGMSL) are disordered. A compositionally biased stretch (low complexity) spans 1001 to 1019 (SESGKTGITSGSGMSGMSL).

Belongs to the chitin synthase family. Class II subfamily.

It localises to the cell membrane. The enzyme catalyses [(1-&gt;4)-N-acetyl-beta-D-glucosaminyl](n) + UDP-N-acetyl-alpha-D-glucosamine = [(1-&gt;4)-N-acetyl-beta-D-glucosaminyl](n+1) + UDP + H(+). Polymerizes chitin, a structural polymer of the cell wall and septum, by transferring the sugar moiety of UDP-GlcNAc to the non-reducing end of the growing chitin polymer. CHS1 mainly responsible for normal yeast cell reproductive growth. The chain is Chitin synthase 1 from Exophiala dermatitidis (strain ATCC 34100 / CBS 525.76 / NIH/UT8656) (Black yeast).